The sequence spans 177 residues: SAYSvFN domain-containing protein 1 (177 aa).

The Cytoplasmic portion of the chain corresponds to 1-100 (MADFQEQLRQ…CLKYTLWTVY (100 aa)). Positions 57–70 (SENSQDEAVTSSES) are enriched in polar residues. The disordered stretch occupies residues 57 to 85 (SENSQDEAVTSSESELVPEEQPTRSTDHH). An intramembrane region (helical) is located at residues 101–121 (LLFWITLYVIAIKLSFGLVFL). The Cytoplasmic segment spans residues 122–177 (MFSALFGIYFNTRTEPKKRNEMSAYSVFNKNCESIDGTLKAEQFEREIRYGSGSVR).

It belongs to the SAYSD1 family.

It is found in the endoplasmic reticulum membrane. Its function is as follows. Ufmylation 'reader' component of a translocation-associated quality control pathway, a mechanism that takes place when a ribosome has stalled during translation, and which is required to degrade clogged substrates. Specifically recognizes and binds ufmylated ribosomes when a ribosome has stalled, promoting the transport of stalled nascent chain to lysosomes for degradation. The protein is SAYSvFN domain-containing protein 1 of Drosophila melanogaster (Fruit fly).